A 238-amino-acid polypeptide reads, in one-letter code: Probable septum site-determining protein MinC (238 aa).

This sequence belongs to the MinC family. In terms of assembly, interacts with MinD and FtsZ.

Its function is as follows. Cell division inhibitor that blocks the formation of polar Z ring septums. Rapidly oscillates between the poles of the cell to destabilize FtsZ filaments that have formed before they mature into polar Z rings. Prevents FtsZ polymerization. This is Probable septum site-determining protein MinC from Xylella fastidiosa (strain M12).